The sequence spans 404 residues: S-adenosylmethionine synthase (404 aa).

His-16 is an ATP binding site. Asp-18 contacts Mg(2+). Glu-44 lines the K(+) pocket. L-methionine-binding residues include Glu-57 and Gln-100. Positions 100–110 (QSPEINQGVAR) are flexible loop. Residues 177 to 179 (DGK), Asp-257, 263 to 264 (RK), Ala-280, and Lys-284 contribute to the ATP site. An L-methionine-binding site is contributed by Asp-257. Residue Lys-288 coordinates L-methionine.

This sequence belongs to the AdoMet synthase family. In terms of assembly, homotetramer; dimer of dimers. The cofactor is Mg(2+). K(+) is required as a cofactor.

The protein localises to the cytoplasm. It catalyses the reaction L-methionine + ATP + H2O = S-adenosyl-L-methionine + phosphate + diphosphate. It participates in amino-acid biosynthesis; S-adenosyl-L-methionine biosynthesis; S-adenosyl-L-methionine from L-methionine: step 1/1. Catalyzes the formation of S-adenosylmethionine (AdoMet) from methionine and ATP. The overall synthetic reaction is composed of two sequential steps, AdoMet formation and the subsequent tripolyphosphate hydrolysis which occurs prior to release of AdoMet from the enzyme. This Bifidobacterium adolescentis (strain ATCC 15703 / DSM 20083 / NCTC 11814 / E194a) protein is S-adenosylmethionine synthase.